Consider the following 351-residue polypeptide: MKLSDFDFDLPEDLIATRPAVPRTSARLLVAKGRQISDSIVSDLPNWLSPGDRLVLNDTRVIPARLTGARHRDTAQGPMQARIEVTLLEPDAQGNWSALIKPLKKVKIAEEIIFSDRLRATLRAVKDGQGVLQFNLEGDDFDAALNAAGAMPLPPYIATRRPADERDKSDYQTVFAQNSGAVAAPTASLHFDKALLSELAARGVLFSYVTLHVGAGTFLPVKVEDVTTHKMHAEWGQVSAAAAAEINATKQAGKRVIPVGTTALRLIETAGREGQIKAWEGDTDIFIYPGFRFNVADALMTNFHLPKSTLMMLVSALMGYDEVRAIYDHAVAEKYRFFSYGDASLLIPQRD.

This sequence belongs to the QueA family. In terms of assembly, monomer.

The protein resides in the cytoplasm. The enzyme catalyses 7-aminomethyl-7-carbaguanosine(34) in tRNA + S-adenosyl-L-methionine = epoxyqueuosine(34) in tRNA + adenine + L-methionine + 2 H(+). Its pathway is tRNA modification; tRNA-queuosine biosynthesis. Functionally, transfers and isomerizes the ribose moiety from AdoMet to the 7-aminomethyl group of 7-deazaguanine (preQ1-tRNA) to give epoxyqueuosine (oQ-tRNA). This Roseobacter denitrificans (strain ATCC 33942 / OCh 114) (Erythrobacter sp. (strain OCh 114)) protein is S-adenosylmethionine:tRNA ribosyltransferase-isomerase.